The following is a 479-amino-acid chain: MASIRELHSQLVRKERSAVEIAEAALQRIETLEPQLKSFLHVTADQAIAQAKAVDQRIAAGEEISLLAGIPIGIKDNLCTRGIPTTCASKILQGFVPPYESTVTQRLAEAGAVAVGKTNLDEFAVGSSTENSAYQTTANPWDLTRVPGGSSGGSAAAVAADECVVALGSDTGGSIRQPAAFCGVVGLKPTYGLVSRYGLVAYASSLDQIGPFSRSVEDTAILLGAIAGHDPKDATSLKVEVPDYTQFLKPSLAGIKVGVITETVTDSPAGQAMQAALEVLQGLGAEIREISCPRFAYGLPAYYIIAPSEASANLARYDGVKYGYRVEEAETLIDMYCRTRAEGFGSEVKRRIMIGTYALSAGYYDAYYLKAQKVRTLIKQDFEAAFAEVDVLVSPTTPTTAFKAGEKTADPLSMYLSDLMTIPVNSAGLPGLSLPCGFDEAGLPYGLQIIGNVLREDQVLHTAYAYEQATEWHLRQPAL.

Catalysis depends on charge relay system residues Lys-75 and Ser-150. The Acyl-ester intermediate role is filled by Ser-174.

The protein belongs to the amidase family. GatA subfamily. As to quaternary structure, heterotrimer of A, B and C subunits.

It catalyses the reaction L-glutamyl-tRNA(Gln) + L-glutamine + ATP + H2O = L-glutaminyl-tRNA(Gln) + L-glutamate + ADP + phosphate + H(+). Allows the formation of correctly charged Gln-tRNA(Gln) through the transamidation of misacylated Glu-tRNA(Gln) in organisms which lack glutaminyl-tRNA synthetase. The reaction takes place in the presence of glutamine and ATP through an activated gamma-phospho-Glu-tRNA(Gln). The protein is Glutamyl-tRNA(Gln) amidotransferase subunit A of Synechococcus sp. (strain ATCC 27144 / PCC 6301 / SAUG 1402/1) (Anacystis nidulans).